The primary structure comprises 333 residues: 5-formaminoimidazole-4-carboxamide-1-(beta)-D-ribofuranosyl 5'-monophosphate synthetase (333 aa).

Residues histidine 9 and serine 73 each coordinate 5-amino-1-(5-phospho-beta-D-ribosyl)imidazole-4-carboxamide. The ATP-grasp domain maps to 94 to 324; that stretch reads RNLFEWEANQ…ISREIKLAIN (231 aa). ATP contacts are provided by residues 124-184 and glutamate 206; that span reads PEDI…VPMY. Asparagine 230 is a binding site for 5-amino-1-(5-phospho-beta-D-ribosyl)imidazole-4-carboxamide. Residues glutamate 269 and glutamate 282 each contribute to the Mg(2+) site.

The protein belongs to the phosphohexose mutase family. It depends on Mg(2+) as a cofactor. Mn(2+) is required as a cofactor.

The enzyme catalyses 5-amino-1-(5-phospho-beta-D-ribosyl)imidazole-4-carboxamide + formate + ATP = 5-formamido-1-(5-phospho-D-ribosyl)imidazole-4-carboxamide + ADP + phosphate. It functions in the pathway purine metabolism; IMP biosynthesis via de novo pathway; 5-formamido-1-(5-phospho-D-ribosyl)imidazole-4-carboxamide from 5-amino-1-(5-phospho-D-ribosyl)imidazole-4-carboxamide (formate route): step 1/1. In terms of biological role, catalyzes the ATP- and formate-dependent formylation of 5-aminoimidazole-4-carboxamide-1-beta-d-ribofuranosyl 5'-monophosphate (AICAR) to 5-formaminoimidazole-4-carboxamide-1-beta-d-ribofuranosyl 5'-monophosphate (FAICAR) in the absence of folates. In Sulfurisphaera tokodaii (strain DSM 16993 / JCM 10545 / NBRC 100140 / 7) (Sulfolobus tokodaii), this protein is 5-formaminoimidazole-4-carboxamide-1-(beta)-D-ribofuranosyl 5'-monophosphate synthetase.